The following is a 357-amino-acid chain: MELNKNLIIPFAKQAGLTSFASMSAVKKALSTKKVGHTGTLDLFADGLLVLLTGQLTRLADIISAEKKTYEAWVEFGTETDTLDPEGEPVLTAPLPSYKNLTESIPSFLGKILQRPPEFSAIKINGKRASDRIRSGEKIKIAEREIEIFKIELKGIITDSGLEFTEKDFTNINAELKIRYAHIVVECSKGTYIRSLVRDLARKASSCAYVRALRRTAVGNFKLEDAAGFDLLNNFSAAPENLFLKEKKILDAAAGKKFYKQKEIDFLEIMAKSIIFSPKTAENLKLPYLFLDRKYLNDFYNGKKIKFNWFLNTDEVLENITGLDLENKKTCVFCGDLWIGIIGLNKNCPKYETVIKN.

Catalysis depends on Asp-42, which acts as the Nucleophile.

This sequence belongs to the pseudouridine synthase TruB family. Type 1 subfamily.

The catalysed reaction is uridine(55) in tRNA = pseudouridine(55) in tRNA. Responsible for synthesis of pseudouridine from uracil-55 in the psi GC loop of transfer RNAs. The polypeptide is tRNA pseudouridine synthase B (Treponema denticola (strain ATCC 35405 / DSM 14222 / CIP 103919 / JCM 8153 / KCTC 15104)).